A 341-amino-acid chain; its full sequence is Glycerol-3-phosphate dehydrogenase [NAD(P)+] (341 aa).

NADPH contacts are provided by serine 14, phenylalanine 15, arginine 35, and lysine 108. Sn-glycerol 3-phosphate is bound by residues lysine 108 and glycine 136. Serine 140 is a binding site for NADPH. Residues lysine 191, aspartate 244, serine 254, arginine 255, and asparagine 256 each contribute to the sn-glycerol 3-phosphate site. Lysine 191 functions as the Proton acceptor in the catalytic mechanism. Arginine 255 lines the NADPH pocket. Residues valine 279 and glutamate 281 each coordinate NADPH.

This sequence belongs to the NAD-dependent glycerol-3-phosphate dehydrogenase family.

Its subcellular location is the cytoplasm. It catalyses the reaction sn-glycerol 3-phosphate + NAD(+) = dihydroxyacetone phosphate + NADH + H(+). The catalysed reaction is sn-glycerol 3-phosphate + NADP(+) = dihydroxyacetone phosphate + NADPH + H(+). It functions in the pathway membrane lipid metabolism; glycerophospholipid metabolism. Its function is as follows. Catalyzes the reduction of the glycolytic intermediate dihydroxyacetone phosphate (DHAP) to sn-glycerol 3-phosphate (G3P), the key precursor for phospholipid synthesis. In Pseudomonas putida (strain GB-1), this protein is Glycerol-3-phosphate dehydrogenase [NAD(P)+].